A 419-amino-acid polypeptide reads, in one-letter code: UDP-N-acetylglucosamine 1-carboxyvinyltransferase (419 aa).

Residue 22-23 (KN) coordinates phosphoenolpyruvate. R95 serves as a coordination point for UDP-N-acetyl-alpha-D-glucosamine. C119 functions as the Proton donor in the catalytic mechanism. C119 bears the 2-(S-cysteinyl)pyruvic acid O-phosphothioketal mark. UDP-N-acetyl-alpha-D-glucosamine is bound by residues 164–167 (KVSV), D308, and I330.

It belongs to the EPSP synthase family. MurA subfamily.

The protein localises to the cytoplasm. It carries out the reaction phosphoenolpyruvate + UDP-N-acetyl-alpha-D-glucosamine = UDP-N-acetyl-3-O-(1-carboxyvinyl)-alpha-D-glucosamine + phosphate. It functions in the pathway cell wall biogenesis; peptidoglycan biosynthesis. Functionally, cell wall formation. Adds enolpyruvyl to UDP-N-acetylglucosamine. The sequence is that of UDP-N-acetylglucosamine 1-carboxyvinyltransferase from Rickettsia felis (strain ATCC VR-1525 / URRWXCal2) (Rickettsia azadi).